A 267-amino-acid polypeptide reads, in one-letter code: 3-deoxy-manno-octulosonate cytidylyltransferase (267 aa).

Belongs to the KdsB family.

It is found in the cytoplasm. It carries out the reaction 3-deoxy-alpha-D-manno-oct-2-ulosonate + CTP = CMP-3-deoxy-beta-D-manno-octulosonate + diphosphate. It functions in the pathway nucleotide-sugar biosynthesis; CMP-3-deoxy-D-manno-octulosonate biosynthesis; CMP-3-deoxy-D-manno-octulosonate from 3-deoxy-D-manno-octulosonate and CTP: step 1/1. It participates in bacterial outer membrane biogenesis; lipopolysaccharide biosynthesis. In terms of biological role, activates KDO (a required 8-carbon sugar) for incorporation into bacterial lipopolysaccharide in Gram-negative bacteria. The chain is 3-deoxy-manno-octulosonate cytidylyltransferase from Paraburkholderia phymatum (strain DSM 17167 / CIP 108236 / LMG 21445 / STM815) (Burkholderia phymatum).